The following is a 699-amino-acid chain: Protein Scribble homolog let-413 (699 aa).

16 LRR repeats span residues 37–59, 60–81, 83–104, 106–127, 129–150, 152–174, 175–196, 198–219, 221–242, 244–265, 267–288, 290–311, 313–334, 336–357, 359–380, and 382–403; these read KLED…FSLR, HLRI…IGNL, QLIE…MQNC, LLTT…ICEC, SITI…IGSL, NLRV…VELR, KLEE…IGKL, SLRE…ISGC, MLDQ…LGRM, NLTD…FGEL, RLQM…IGKC, SLTE…IGDL, QLTT…IGNC, SLTV…IGKC, NLTV…VKVL, and KLQA…SETR. A PDZ domain is found at 584–665; sequence AGGTSNDPAP…RSPSPVSRTS (82 aa). Residues 656-699 form a disordered region; sequence RSPSPVSRTSEPSLNGSSHQLNHFDAGSPDSTMFVTSSTPVYAS. 2 stretches are compositionally biased toward polar residues: residues 659 to 676 and 684 to 699; these read SPVS…SHQL and PDST…VYAS.

This sequence belongs to the LAP (LRR and PDZ) protein family. Expressed in the terminal web of the intestine. Expressed in seam cells. Expressed in the basolateral surfaces of epithelia and the nervous system. Expressed in the intestine, epidermis, excretory canal, reproductive system including vulva, uterus and spermatheca, in both larval and adult stage animals.

The protein resides in the basolateral cell membrane. Functionally, critical role in assembling adherens junctions; adapter protein involved in polarizing protein trafficking in epithelial cells. Necessary to maintain, not establish, the entire terminal web (organelle-depleted, intermediate filament-rich layer of cytoplasm that underlies the apical microvilli of polarized epithelial cells) or brush border assembly at the apical surface gut cells. Required for correct localization of ifb-2 intermediate filaments in the terminal web. Required for dlg-1 and hmr-1 lateral localization. Maintains cell polarity by correctly positioning adherens junction protein components including ajm-1 and hmp-1 at discrete subapical positions. Plays a role in the correct localization of the dlg-1-ajm-1 complex, polarity protein par-3, and actin microfilament to the apical junction of spermatheca cells, and is required for ovulation. Regulates the establishment of newly-formed epithelia in conjunction with dlg-1. Required in the epidermis during larval development. Plays a role in cellular junction integrity and in the directed outgrowth of seam cells, towards neighboring seam cells, during larval development; probably acts by promoting the assembly and stability of dlg-1 at apical junctions. This Caenorhabditis elegans protein is Protein Scribble homolog let-413.